The following is a 115-amino-acid chain: NADH-ubiquinone oxidoreductase chain 3 (115 aa).

Helical transmembrane passes span 4–24, 55–75, and 86–106; these read LTAL…AFWL, FFLV…LLPL, and VMML…AYEW.

Belongs to the complex I subunit 3 family. In terms of assembly, core subunit of respiratory chain NADH dehydrogenase (Complex I) which is composed of 45 different subunits. Interacts with TMEM186. Interacts with TMEM242.

It localises to the mitochondrion inner membrane. It carries out the reaction a ubiquinone + NADH + 5 H(+)(in) = a ubiquinol + NAD(+) + 4 H(+)(out). Functionally, core subunit of the mitochondrial membrane respiratory chain NADH dehydrogenase (Complex I) which catalyzes electron transfer from NADH through the respiratory chain, using ubiquinone as an electron acceptor. Essential for the catalytic activity of complex I. This chain is NADH-ubiquinone oxidoreductase chain 3, found in Isthmomys pirrensis (Mount Pirri Isthmus rat).